A 413-amino-acid polypeptide reads, in one-letter code: Alpha-1-antitrypsin-like protein CM55-MS (413 aa).

Residues 1–24 (MPSSISWGLLLLAALSCLGPGSLA) form the signal peptide. Pyrrolidone carboxylic acid is present on Gln25. Residues Asn65, Asn102, Asn165, and Asn266 are each glycosylated (N-linked (GlcNAc...) asparagine). The segment at 368–387 (GATVGGITFMSRPKEVIFDR) is RCL.

Belongs to the serpin family. Expressed in liver.

The protein resides in the secreted. Serine protease inhibitor. The protein is Alpha-1-antitrypsin-like protein CM55-MS of Tamias sibiricus (Siberian chipmunk).